We begin with the raw amino-acid sequence, 327 residues long: Fructose import binding protein FruE (327 aa).

The first 22 residues, 1-22, serve as a signal peptide directing secretion; that stretch reads MKNWKKAIALVASAAALVSVAA. Cysteine 23 carries N-palmitoyl cysteine lipidation. Cysteine 23 carries S-diacylglycerol cysteine lipidation.

The protein belongs to the bacterial solute-binding protein 2 family. As to quaternary structure, the complex is composed of an ATP-binding protein (FruK), two transmembrane proteins (FruF and FruG) and a solute-binding protein (FruE).

It is found in the cell membrane. Functionally, part of the high-affinity ABC transporter complex FruEKFG involved in fructose uptake. Can also transport ribose and xylose, with lower affinity. Binds fructose, ribose and xylose, with fructose as the preferred substrate. The chain is Fructose import binding protein FruE from Bifidobacterium longum (strain NCC 2705).